The primary structure comprises 398 residues: Mu-type opioid receptor (398 aa).

Residues 1–66 (MDSSTGPGNT…CPQTGSPSMV (66 aa)) lie on the Extracellular side of the membrane. N-linked (GlcNAc...) asparagine glycans are attached at residues N9, N31, N38, N46, and N53. Residues 67–91 (TAITIMALYSIVCVVGLFGNFLVMY) traverse the membrane as a helical segment. Topologically, residues 92-104 (VIVRYTKMKTATN) are cytoplasmic. The helical transmembrane segment at 105-129 (IYIFNLALADALATSTLPFQSVNYL) threads the bilayer. At 130-140 (MGTWPFGTILC) the chain is on the extracellular side. A disulfide bridge links C140 with C217. Residues 141–163 (KIVISIDYYNMFTSIFTLCTMSV) traverse the membrane as a helical segment. At 164–183 (DRYIAVCHPVKALDFRTPRN) the chain is on the cytoplasmic side. A Phosphotyrosine modification is found at Y166. Residues 184–205 (AKIVNVCNWILSSAIGLPVMFM) form a helical membrane-spanning segment. Topologically, residues 206 to 228 (ATTKYRQGSIDCTLTFSHPTWYW) are extracellular. Residues 229-253 (ENLLKICVFIFAFIMPVLIITVCYG) form a helical membrane-spanning segment. Residues 254 to 277 (LMILRLKSVRMLSGSKEKDRNLRR) are Cytoplasmic-facing. Residues 278-304 (ITRMVLVVVAVFIVCWTPIHIYVIIKA) form a helical membrane-spanning segment. Residues 305 to 312 (LITIPETT) are Extracellular-facing. Residues 313–336 (FQTVSWHFCIALGYTNSCLNPVLY) traverse the membrane as a helical segment. The short motif at 332–336 (NPVLY) is the NPxxY; plays a role in stabilizing the activated conformation of the receptor element. The Cytoplasmic segment spans residues 337 to 398 (AFLDENFKRC…NLEAETAPLP (62 aa)). C351 is lipidated: S-palmitoyl cysteine. Residues 361–385 (QNSTRVRQNTREHPSTANTVDRTNH) are disordered. A Phosphoserine modification is found at S363. Position 370 is a phosphothreonine (T370). S375 is modified (phosphoserine). At T394 the chain carries Phosphothreonine.

The protein belongs to the G-protein coupled receptor 1 family. Forms homooligomers and heterooligomers with other GPCRs, such as OPRD1, OPRK1, OPRL1, NPFFR2, ADRA2A, SSTR2, CNR1 and CCR5 (probably in dimeric forms). Interacts with heterotrimeric G proteins; interaction with a heterotrimeric complex containing GNAI1, GNB1 and GNG2 stabilizes the active conformation of the receptor and increases its affinity for endomorphin-2, the synthetic opioid peptide DAMGO and for morphinan agonists. Interacts with PPL; the interaction disrupts agonist-mediated G-protein activation. Interacts (via C-terminus) with DNAJB4 (via C-terminus). Interacts with calmodulin; the interaction inhibits the constitutive activity of OPRM1; it abolishes basal and attenuates agonist-stimulated G-protein coupling. Interacts with FLNA, PLD2, RANBP9 and WLS and GPM6A. Interacts with RTP4. Interacts with SYP and GNAS. Interacts with RGS9, RGS17, RGS20, RGS4, PPP1R9B and HINT1. In terms of processing, phosphorylated. Differentially phosphorylated in basal and agonist-induced conditions. Agonist-mediated phosphorylation modulates receptor internalization. Phosphorylated by GRK2 in a agonist-dependent manner. Phosphorylation at Tyr-166 requires receptor activation, is dependent on non-receptor protein tyrosine kinase Src and results in a decrease in agonist efficacy by reducing G-protein coupling efficiency. Phosphorylated on tyrosine residues; the phosphorylation is involved in agonist-induced G-protein-independent receptor down-regulation. Phosphorylation at Ser-375 is involved in G-protein-dependent but not beta-arrestin-dependent activation of the ERK pathway. Ubiquitinated. A basal ubiquitination seems not to be related to degradation. Ubiquitination is increased upon formation of OPRM1:OPRD1 oligomers leading to proteasomal degradation; the ubiquitination is diminished by RTP4. As to expression, brain. Is expressed in the cerebral cortex, caudate putamen, nucleus accumbens, septal nuclei, thalamus, hippocampus, and habenula. Not detected in cerebellum.

Its subcellular location is the cell membrane. The protein resides in the cell projection. The protein localises to the axon. It is found in the perikaryon. It localises to the dendrite. Its subcellular location is the endosome. In terms of biological role, receptor for endogenous opioids such as beta-endorphin and endomorphin. Receptor for natural and synthetic opioids including morphine, heroin, DAMGO, fentanyl, etorphine, buprenorphin and methadone. Also activated by enkephalin peptides, such as Met-enkephalin or Met-enkephalin-Arg-Phe, with higher affinity for Met-enkephalin-Arg-Phe. Agonist binding to the receptor induces coupling to an inactive GDP-bound heterotrimeric G-protein complex and subsequent exchange of GDP for GTP in the G-protein alpha subunit leading to dissociation of the G-protein complex with the free GTP-bound G-protein alpha and the G-protein beta-gamma dimer activating downstream cellular effectors. The agonist- and cell type-specific activity is predominantly coupled to pertussis toxin-sensitive G(i) and G(o) G alpha proteins, GNAI1, GNAI2, GNAI3 and GNAO1 isoforms Alpha-1 and Alpha-2, and to a lesser extent to pertussis toxin-insensitive G alpha proteins GNAZ and GNA15. They mediate an array of downstream cellular responses, including inhibition of adenylate cyclase activity and both N-type and L-type calcium channels, activation of inward rectifying potassium channels, mitogen-activated protein kinase (MAPK), phospholipase C (PLC), phosphoinositide/protein kinase (PKC), phosphoinositide 3-kinase (PI3K) and regulation of NF-kappa-B. Also couples to adenylate cyclase stimulatory G alpha proteins. The selective temporal coupling to G-proteins and subsequent signaling can be regulated by RGSZ proteins, such as RGS9, RGS17 and RGS4. Phosphorylation by members of the GPRK subfamily of Ser/Thr protein kinases and association with beta-arrestins is involved in short-term receptor desensitization. Beta-arrestins associate with the GPRK-phosphorylated receptor and uncouple it from the G-protein thus terminating signal transduction. The phosphorylated receptor is internalized through endocytosis via clathrin-coated pits which involves beta-arrestins. The activation of the ERK pathway occurs either in a G-protein-dependent or a beta-arrestin-dependent manner and is regulated by agonist-specific receptor phosphorylation. Acts as a class A G-protein coupled receptor (GPCR) which dissociates from beta-arrestin at or near the plasma membrane and undergoes rapid recycling. Receptor down-regulation pathways are varying with the agonist and occur dependent or independent of G-protein coupling. Endogenous ligands induce rapid desensitization, endocytosis and recycling. Heterooligomerization with other GPCRs can modulate agonist binding, signaling and trafficking properties. This chain is Mu-type opioid receptor (Oprm1), found in Rattus norvegicus (Rat).